Reading from the N-terminus, the 885-residue chain is Alanine--tRNA ligase (885 aa).

Residues 426 to 444 (QEQKTRARQDRREKQRGGA) show a composition bias toward basic and acidic residues. Residues 426–445 (QEQKTRARQDRREKQRGGAE) are disordered. Zn(2+)-binding residues include His568, His572, Cys671, and His675.

Belongs to the class-II aminoacyl-tRNA synthetase family. Requires Zn(2+) as cofactor.

The protein resides in the cytoplasm. The catalysed reaction is tRNA(Ala) + L-alanine + ATP = L-alanyl-tRNA(Ala) + AMP + diphosphate. Catalyzes the attachment of alanine to tRNA(Ala) in a two-step reaction: alanine is first activated by ATP to form Ala-AMP and then transferred to the acceptor end of tRNA(Ala). Also edits incorrectly charged Ser-tRNA(Ala) and Gly-tRNA(Ala) via its editing domain. This chain is Alanine--tRNA ligase, found in Chlorobium phaeovibrioides (strain DSM 265 / 1930) (Prosthecochloris vibrioformis (strain DSM 265)).